A 189-amino-acid chain; its full sequence is dCTP deaminase (189 aa).

DCTP contacts are provided by residues 112–117 (KSTYAR), 136–138 (TLE), Gln-157, Tyr-171, and Gln-181. The Proton donor/acceptor role is filled by Glu-138.

The protein belongs to the dCTP deaminase family. As to quaternary structure, homotrimer.

It carries out the reaction dCTP + H2O + H(+) = dUTP + NH4(+). Its pathway is pyrimidine metabolism; dUMP biosynthesis; dUMP from dCTP (dUTP route): step 1/2. In terms of biological role, catalyzes the deamination of dCTP to dUTP. The chain is dCTP deaminase from Burkholderia mallei (strain NCTC 10247).